A 149-amino-acid chain; its full sequence is D-aminoacyl-tRNA deacylase (149 aa).

Residues 137-138 (GP) carry the Gly-cisPro motif, important for rejection of L-amino acids motif.

Belongs to the DTD family. In terms of assembly, homodimer.

The protein localises to the cytoplasm. The catalysed reaction is glycyl-tRNA(Ala) + H2O = tRNA(Ala) + glycine + H(+). It carries out the reaction a D-aminoacyl-tRNA + H2O = a tRNA + a D-alpha-amino acid + H(+). An aminoacyl-tRNA editing enzyme that deacylates mischarged D-aminoacyl-tRNAs. Also deacylates mischarged glycyl-tRNA(Ala), protecting cells against glycine mischarging by AlaRS. Acts via tRNA-based rather than protein-based catalysis; rejects L-amino acids rather than detecting D-amino acids in the active site. By recycling D-aminoacyl-tRNA to D-amino acids and free tRNA molecules, this enzyme counteracts the toxicity associated with the formation of D-aminoacyl-tRNA entities in vivo and helps enforce protein L-homochirality. This Thermotoga petrophila (strain ATCC BAA-488 / DSM 13995 / JCM 10881 / RKU-1) protein is D-aminoacyl-tRNA deacylase.